We begin with the raw amino-acid sequence, 825 residues long: MGWLCSGLLFPVSCLVLLQVASSGNMKVLQEPTCVSDYMSISTCEWKMNGPTNCSTELRLLYQLVFLLSEAHTCIPENNGGAGCVCHLLMDDVVSADNYTLDLWAGQQLLWKGSFKPSEHVKPRAPGNLTVHTNVSDTLLLTWSNPYPPDNYLYNHLTYAVNIWSENDPADFRIYNVTYLEPSLRIAASTLKSGISYRARVRAWAQCYNTTWSEWSPSTKWHNSYREPFEQHLLLGVSVSCIVILAVCLLCYVSITKIKKEWWDQIPNPARSRLVAIIIQDAQGSQWEKRSRGQEPAKCPHWKNCLTKLLPCFLEHNMKRDEDPHKAAKEMPFQGSGKSAWCPVEISKTVLWPESISVVRCVELFEAPVECEEEEEVEEEKGSFCASPESSRDDFQEGREGIVARLTESLFLDLLGEENGGFCQQDMGESCLLPPSGSTSAHMPWDEFPSAGPKEAPPWGKEQPLHLEPSPPASPTQSPDNLTCTETPLVIAGNPAYRSFSNSLSQSPCPRELGPDPLLARHLEEVEPEMPCVPQLSEPTTVPQPEPETWEQILRRNVLQHGAAAAPVSAPTSGYQEFVHAVEQGGTQASAVVGLGPPGEAGYKAFSSLLASSAVSPEKCGFGASSGEEGYKPFQDLIPGCPGDPAPVPVPLFTFGLDREPPRSPQSSHLPSSSPEHLGLEPGEKVEDMPKPPLPQEQATDPLVDSLGSGIVYSALTCHLCGHLKQCHGQEDGGQTPVMASPCCGCCCGDRSSPPTTPLRAPDPSPGGVPLEASLCPASLAPSGISEKSKSSSSFHPAPGNAQSSSQTPKIVNFVSVGPTYMRVS.

The first 25 residues, 1 to 25 (MGWLCSGLLFPVSCLVLLQVASSGN), serve as a signal peptide directing secretion. The Extracellular segment spans residues 26–232 (MKVLQEPTCV…NSYREPFEQH (207 aa)). A disulfide bridge links Cys34 with Cys44. N-linked (GlcNAc...) asparagine glycosylation occurs at Asn53. A disulfide bridge connects residues Cys74 and Cys86. Residues Asn98, Asn128, Asn134, Asn176, and Asn209 are each glycosylated (N-linked (GlcNAc...) asparagine). Residues 125-224 (APGNLTVHTN…WSPSTKWHNS (100 aa)) enclose the Fibronectin type-III domain. Positions 212 to 216 (WSEWS) match the WSXWS motif motif. The chain crosses the membrane as a helical span at residues 233–256 (LLLGVSVSCIVILAVCLLCYVSIT). Residues 257-825 (KIKKEWWDQI…SVGPTYMRVS (569 aa)) lie on the Cytoplasmic side of the membrane. The Box 1 motif signature appears at 262 to 270 (WWDQIPNPA). 2 disordered regions span residues 373–397 (EEEE…DFQE) and 433–485 (LPPS…LTCT). The required for IRS1 activation and IL4-induced cell growth stretch occupies residues 437–557 (GSTSAHMPWD…ETWEQILRRN (121 aa)). The span at 475–485 (PTQSPDNLTCT) shows a compositional bias: polar residues. Phosphotyrosine occurs at positions 497, 575, 603, and 631. The required for IL4-induced gene expression stretch occupies residues 558 to 657 (VLQHGAAAAP…VPVPLFTFGL (100 aa)). Residues 651–703 (PLFTFGLDREPPRSPQSSHLPSSSPEHLGLEPGEKVEDMPKPPLPQEQATDPL) are disordered. Over residues 665-677 (PQSSHLPSSSPEH) the composition is skewed to low complexity. Over residues 678 to 690 (LGLEPGEKVEDMP) the composition is skewed to basic and acidic residues. Positions 711-716 (IVYSAL) match the ITIM motif motif. Residues 782–809 (PSGISEKSKSSSSFHPAPGNAQSSSQTP) are disordered.

This sequence belongs to the type I cytokine receptor family. Type 4 subfamily. The functional IL4 receptor is formed by initial binding of IL4 to IL4R. Subsequent recruitment to the complex of the common gamma chain, in immune cells, creates a type I receptor and, in non-immune cells, of IL13RA1 forms a type II receptor. IL4R can also interact with the IL13/IL13RA1 complex to form a similar type II receptor. Interacts with PIK3C3. Interacts with the SH2-containing phosphatases, PTPN6/SHIP1, PTPN11/SHIP2 and INPP5D/SHIP. Interacts with JAK1 through a Box 1-containing region; inhibited by SOCS5. Interacts with SOCS5; inhibits IL4 signaling. Interacts with JAK3. Interacts with CLM1. Interacts with IL13RA2. Post-translationally, on IL4 binding, phosphorylated on C-terminal tyrosine residues. Phosphorylation on any one of tyrosine residues, Tyr-575, Tyr-603 or Tyr-631, is required for STAT6-induced gene induction. In terms of processing, the soluble form (sIL4R/IL4BP) can also be produced by proteolytic cleavage at the cell surface (shedding) by a metalloproteinase. In terms of tissue distribution, isoform 1 and isoform 2 are highly expressed in activated T-cells.

Its subcellular location is the cell membrane. The protein localises to the secreted. Its function is as follows. Receptor for both interleukin 4 and interleukin 13. Couples to the JAK1/2/3-STAT6 pathway. The IL4 response is involved in promoting Th2 differentiation. The IL4/IL13 responses are involved in regulating IgE production and, chemokine and mucus production at sites of allergic inflammation. In certain cell types, can signal through activation of insulin receptor substrates, IRS1/IRS2. Functionally, soluble IL4R (sIL4R) inhibits IL4-mediated cell proliferation and IL5 up-regulation by T-cells. The chain is Interleukin-4 receptor subunit alpha (IL4R) from Homo sapiens (Human).